Here is a 169-residue protein sequence, read N- to C-terminus: MGLKYFSHLPEELREKIVHDHLQQERKKEFLEKAIEDSCRRHVSLLKSDPSPSEMYSLSKFLDSLADYVGRQFNTRCLIKWRKDVPANIKFQVMEEQHLRLYGFLDMDDLSCRELLPPEEDDDITYEDGMIVNCSELDKLFAALGIRVVYITVSNNCICTPLNKDIVIS.

The binding to host SKP1 protein stretch occupies residues 9-22 (LPEELREKIVHDHL). An LXCXE motif, interaction with host RBR motif is present at residues 110–114 (LSCRE).

It belongs to the nanovirus Clink protein family. Interacts with host SKP1. Interacts (via LXCXE domain) with host retinoblastoma-related protein 1 (RBR1). Interacts (via LXCXE domain) with retinoblastoma-related proteins (RBR).

Interacts with and disrupts the function of host retinoblastoma-related proteins RBR, which are key regulators of the cell cycle. Induces transcriptional activation of E2F-regulated S-phase and G2/M-phase-specific genes. Inactivation of the ability of RBR to arrest the cell cycle leads to the stimulation of viral DNA replication. This Faba bean necrotic yellows virus (isolate Egyptian EV1-93) (FBNYV) protein is Cell cycle link protein (DNA-C).